Here is a 915-residue protein sequence, read N- to C-terminus: Scaffold attachment factor B1 (915 aa).

Residues 1–24 (MAETLSGLGDSGAAGAAALSSASS) show a composition bias toward low complexity. Residues 1–33 (MAETLSGLGDSGAAGAAALSSASSETGTRRLSD) are disordered. Ala2 carries the post-translational modification N-acetylalanine. Residues Ser24 and Ser55 each carry the phosphoserine modification. In terms of domain architecture, SAP spans 31-65 (LSDLRVIDLRAELRKRNVDSSGNKSVLMERLKKAI). The segment at 64–118 (AIEDEGGNPDEIEITSEGNKKTSKRSSKGRKPEEEGVEDNGLEENSGDGQEDVET) is disordered. The span at 67 to 77 (DEGGNPDEIEI) shows a compositional bias: acidic residues. Phosphoserine is present on Ser79. Over residues 98-118 (EGVEDNGLEENSGDGQEDVET) the composition is skewed to acidic residues. Glycyl lysine isopeptide (Lys-Gly) (interchain with G-Cter in SUMO2) cross-links involve residues Lys172 and Lys186. The residue at position 188 (Thr188) is a Phosphothreonine. A phosphoserine mark is found at Ser195, Ser197, and Ser209. Residues 221–407 (LGETCKSEPV…EKGRSSCGRN (187 aa)) form a disordered region. Residues 225 to 234 (CKSEPVKEES) are compositionally biased toward basic and acidic residues. Lys231 participates in a covalent cross-link: Glycyl lysine isopeptide (Lys-Gly) (interchain with G-Cter in SUMO). Over residues 275–286 (SESTAHAQSSKA) the composition is skewed to polar residues. Over residues 293–309 (VKREPAEQPGDGERTDC) the composition is skewed to basic and acidic residues. Lys294 participates in a covalent cross-link: Glycyl lysine isopeptide (Lys-Gly) (interchain with G-Cter in SUMO). The segment covering 319-330 (EQSSAASELAEA) has biased composition (low complexity). Over residues 346 to 359 (EARDSKEDGRKFDF) the composition is skewed to basic and acidic residues. A compositionally biased stretch (polar residues) spans 371–383 (ESSTSEGADQKMS). Residue Lys381 forms a Glycyl lysine isopeptide (Lys-Gly) (interchain with G-Cter in SUMO2) linkage. Residues Ser383 and Ser384 each carry the phosphoserine modification. The segment covering 390–401 (DTKRLSKEEKGR) has biased composition (basic and acidic residues). Lys392 is covalently cross-linked (Glycyl lysine isopeptide (Lys-Gly) (interchain with G-Cter in SUMO2)). Positions 406–484 (RNFWVSGLSS…KMISVEKAKN (79 aa)) constitute an RRM domain. Ser415 is modified (phosphoserine). 2 stretches are compositionally biased toward basic and acidic residues: residues 477–551 (ISVE…ERSR) and 559–570 (GTERTVVMDKSK). Disordered stretches follow at residues 477 to 641 (ISVE…EREE), 671 to 708 (RERM…ERRP), and 749 to 915 (FDHR…TRRY). Residues Lys483, Lys514, Lys543, and Lys570 each participate in a glycyl lysine isopeptide (Lys-Gly) (interchain with G-Cter in SUMO2) cross-link. The interaction with POLR2A. Interaction with SFRS1; SFRS9 and SFRS10 stretch occupies residues 528–792 (GDDGSGEKSK…RHGGPERHGR (265 aa)). A Glycyl lysine isopeptide (Lys-Gly) (interchain with G-Cter in SUMO1); alternate cross-link involves residue Lys578. Lys578 is covalently cross-linked (Glycyl lysine isopeptide (Lys-Gly) (interchain with G-Cter in SUMO2); alternate). Ser580, Ser582, Ser601, and Ser604 each carry phosphoserine. Over residues 581-641 (GSKERASKSQ…RMQAQWEREE (61 aa)) the composition is skewed to basic and acidic residues. Positions 599–616 (KRSVVSFDKVKEPRKSRD) match the Nuclear localization signal motif. Residues 599-915 (KRSVVSFDKV…PSDARFTRRY (317 aa)) form an interaction with SAFB2 region. Lys607 carries the post-translational modification N6-acetyllysine. Residues 749–796 (FDHRDRGRYPDHSVDRREGSRSMMGEREGQHYPERHGGPERHGRDSRD) show a composition bias toward basic and acidic residues. Arg811 bears the Omega-N-methylarginine mark. Composition is skewed to basic and acidic residues over residues 817 to 832 (PRRD…DDRS) and 841 to 851 (MMDRDHKRWQG). Lys847 is covalently cross-linked (Glycyl lysine isopeptide (Lys-Gly) (interchain with G-Cter in SUMO2)). An asymmetric dimethylarginine mark is found at Arg868, Arg874, and Arg884. Residues 892 to 901 (GMQGGFGGQS) show a composition bias toward gly residues. Over residues 905–915 (RPSDARFTRRY) the composition is skewed to basic and acidic residues.

As to quaternary structure, monomer and homodimer. Forms heterodimers with SAFB2. Interacts with KHDRBS3. Interacts with CLK2. Interacts with POLR2A, SRSF1/ASF, SRSF9/SRp30c and SFSF10/TRA2B. Interacts with isoform 1 and isoform 2 of SRPK1 and inhibits its activity. Interacts with RBMX. Interacts with FUS. Interacts with ZBED4. Post-translationally, sumoylated by PIAS1 with SUMO1 and SUMO2/3, desumoylated by SENP1. Sumoylation is required for transcriptional repressor activity. Ubiquitous. Expressed at high levels in the CNS and at low levels in the liver. Expressed in a wide number of breast cancer cell lines.

It localises to the nucleus. In terms of biological role, binds to scaffold/matrix attachment region (S/MAR) DNA and forms a molecular assembly point to allow the formation of a 'transcriptosomal' complex (consisting of SR proteins and RNA polymerase II) coupling transcription and RNA processing. Functions as an estrogen receptor corepressor and can also bind to the HSP27 promoter and decrease its transcription. Thereby acts as a negative regulator of cell proliferation. When associated with RBMX, binds to and stimulates transcription from the SREBF1 promoter. The chain is Scaffold attachment factor B1 (SAFB) from Homo sapiens (Human).